The sequence spans 302 residues: Mediator of RNA polymerase II transcription subunit 4 (302 aa).

Residues 98 to 145 (QLHANVEKIIAINDDLKSKIEELDRHRRLGENIKELEAESSNLDNTSK) adopt a coiled-coil conformation. Residues 239–302 (GTTEEEKIQE…LFDSEDEFSD (64 aa)) are disordered. A compositionally biased stretch (basic and acidic residues) spans 242–265 (EEEKIQEKKDEQVKKADKQQDTGI). Residues 268 to 278 (GSFGDYGSSSS) are compositionally biased toward low complexity. Over residues 292 to 302 (DLFDSEDEFSD) the composition is skewed to acidic residues.

The protein belongs to the Mediator complex subunit 4 family. As to quaternary structure, component of the Mediator complex.

It is found in the nucleus. Functionally, component of the Mediator complex, a coactivator involved in the regulated transcription of nearly all RNA polymerase II-dependent genes. Mediator functions as a bridge to convey information from gene-specific regulatory proteins to the basal RNA polymerase II transcription machinery. Mediator is recruited to promoters by direct interactions with regulatory proteins and serves as a scaffold for the assembly of a functional preinitiation complex with RNA polymerase II and the general transcription factors. This is Mediator of RNA polymerase II transcription subunit 4 (MED4) from Scheffersomyces stipitis (strain ATCC 58785 / CBS 6054 / NBRC 10063 / NRRL Y-11545) (Yeast).